The sequence spans 160 residues: Putative oxygenase ATEG_00330 (160 aa).

One can recognise an EthD domain in the interval histidine 24 to alanine 100.

It belongs to the tpcK family.

Functionally, putative oxygenase; part of the gene cluster that mediates the biosynthesis of isoflavipucine. The PKS part of the PKS-NRPS ATEG_00325 probably assembles a triketide from an acetyl starter and two malonyl-CoA extender units. The poly-beta-keto intermediate would then be fused to the leucine unit by the NRPS part. The resulting amide would be liberated from the PKS-NRPS through reductive release of the linear PKS-NRPS product from the enzyme complex. Further steps in isoflapucine synthesis include a cyclization step, an oxidation step, a hydrolysis step involving a trans-amidation, and an additional oxidation step, leading to flavipucine. Formation of isoflavipucine from flavipucine requires an unusual rearrangement. Alternative rearrangement reactions could build up rubrobramide, representing a branching of flavipucine biosynthesis. The enzymes involved in the post-PKS-NRPS steps have not been identified yet, but the putative oxygenases ATEG_003329 and ATEG_00330 encoded by the cluster could play a role. The sequence is that of Putative oxygenase ATEG_00330 from Aspergillus terreus (strain NIH 2624 / FGSC A1156).